Reading from the N-terminus, the 230-residue chain is Ureidoacrylate amidohydrolase RutB (230 aa).

The active-site Proton acceptor is D24. Residue K133 is part of the active site. C166 (nucleophile) is an active-site residue.

The protein belongs to the isochorismatase family. RutB subfamily.

It catalyses the reaction (Z)-3-ureidoacrylate + H2O + H(+) = (Z)-3-aminoacrylate + NH4(+) + CO2. The catalysed reaction is (Z)-3-ureidoacrylate + H2O = (Z)-3-aminoacrylate + carbamate + H(+). It carries out the reaction (Z)-2-methylureidoacrylate + H2O + H(+) = (Z)-2-methylaminoacrylate + NH4(+) + CO2. Its function is as follows. Hydrolyzes ureidoacrylate to form aminoacrylate and carbamate. The carbamate hydrolyzes spontaneously, thereby releasing one of the nitrogen atoms of the pyrimidine ring as ammonia and one of its carbon atoms as CO2. The chain is Ureidoacrylate amidohydrolase RutB from Enterobacter sp. (strain 638).